Reading from the N-terminus, the 288-residue chain is Bifunctional protein FolD 1 (288 aa).

NADP(+)-binding positions include 170 to 172 and Ile-236; that span reads GPG.

The protein belongs to the tetrahydrofolate dehydrogenase/cyclohydrolase family. As to quaternary structure, homodimer.

It carries out the reaction (6R)-5,10-methylene-5,6,7,8-tetrahydrofolate + NADP(+) = (6R)-5,10-methenyltetrahydrofolate + NADPH. The enzyme catalyses (6R)-5,10-methenyltetrahydrofolate + H2O = (6R)-10-formyltetrahydrofolate + H(+). It functions in the pathway one-carbon metabolism; tetrahydrofolate interconversion. Catalyzes the oxidation of 5,10-methylenetetrahydrofolate to 5,10-methenyltetrahydrofolate and then the hydrolysis of 5,10-methenyltetrahydrofolate to 10-formyltetrahydrofolate. The sequence is that of Bifunctional protein FolD 1 from Deinococcus geothermalis (strain DSM 11300 / CIP 105573 / AG-3a).